The chain runs to 188 residues: Succinate dehydrogenase [ubiquinone] cytochrome b large subunit, mitochondrial (188 aa).

Residues 1–31 constitute a mitochondrion transit peptide; that stretch reads MSLLPYNATLCRVLRHNVKFIRSVQTSAARV. Residues 32–69 are Mitochondrial matrix-facing; it reads SAEKTPIQVWGWDYLMRQRALKRPIAPHLTIYKPQMTW. The helical transmembrane segment at 70–95 threads the bilayer; sequence MVSGLHRVTGCAMAGTLLIGGVGFSV. A rhodoquinol contacts are provided by Ser-72 and Arg-76. A ubiquinone is bound by residues Ser-72 and Arg-76. The Mitochondrial intermembrane portion of the chain corresponds to 96–113; sequence LPLDFTTFVEFIRGLGIP. The helical transmembrane segment at 114-140 threads the bilayer; it reads WVILDTFKFIIAFPIAFHTLNGIRFIG. A heme b-binding site is contributed by His-131. At 141 to 153 the chain is on the mitochondrial matrix side; sequence FDMAKGTDIPSIY. A helical membrane pass occupies residues 154–176; sequence RGAYLVLGLAALISLAVVVYPRW. Topologically, residues 177–188 are mitochondrial intermembrane; that stretch reads ERHKKATLPTNH.

Belongs to the cytochrome b558 family. Component of the mitochondrial electron transport chain complex II composed of four subunits: a flavoprotein (Fp), an iron-sulfur protein (Ip), and a large cytochrome b (CybL) subunit and a small cytochrome b (CybS) subunit. There are 2 developmental stage-specific forms of complex II which have the Ip and CybL subunits in common. Complex II from the free-living larvae (aerobic environment) acts as a succinate dehydrogenase and is composed of the common subunit Ip and CybL and the stage specific subunits FpL and CybSL. Complex II from parasitic larvae and adults (anaerobic environment) acts as a fumarate reductase and is composed of the common subunit Ip and CybL and the stage specific subunits FpA and CybSA. Heme b serves as cofactor. In terms of tissue distribution, expressed in adult muscles (at protein level).

Its subcellular location is the mitochondrion inner membrane. Its pathway is carbohydrate metabolism; tricarboxylic acid cycle; fumarate from succinate (eukaryal route): step 1/1. Functionally, membrane-bound large subunit (CybL) of the mitochondrial electron transport chain complex II, which together with the membrane-bound small subunit (CybS), anchor the catalytic subunits to the inner mitochondria membrane. During the free-living egg-larvae stages, which occur in an aerobic environment, complex II acts as a succinate dehydrogenase by transferring electrons from succinate to ubiquinone. During the parasitic larvae and adult stages, which occur in an anaerobic environment, complex II acts as a fumarate reductase by transferring electrons from rhodoquinol to fumarate. This Ascaris suum (Pig roundworm) protein is Succinate dehydrogenase [ubiquinone] cytochrome b large subunit, mitochondrial.